The following is a 2376-amino-acid chain: MAG2-interacting protein 2 (2376 aa).

As to quaternary structure, forms a complex with MAG2, ZW10/MIP1 and MIP3 on the endoplasmic reticulum.

The protein localises to the endoplasmic reticulum membrane. Required for proper maturation of seed storage proteins. Forms a complex with MAG2, ZW10/MIP1 and MIP3 on the endoplasmic reticulum that may be responsible for efficient transport of seed storage proteins. In Arabidopsis thaliana (Mouse-ear cress), this protein is MAG2-interacting protein 2.